Here is a 415-residue protein sequence, read N- to C-terminus: Actin-like protein 7B (415 aa).

Residues 1–31 form a disordered region; it reads MATRNSPMPLGTAQGDPGEAGTRPGPDASLR. Ser6 bears the Phosphoserine mark.

Belongs to the actin family. Detected only in the testis and, to a lesser extent, in the prostate.

It localises to the cytoplasm. It is found in the cytoskeleton. This Homo sapiens (Human) protein is Actin-like protein 7B (ACTL7B).